A 132-amino-acid polypeptide reads, in one-letter code: Ribosome-binding factor A (132 aa).

The protein belongs to the RbfA family. In terms of assembly, monomer. Binds 30S ribosomal subunits, but not 50S ribosomal subunits or 70S ribosomes.

It is found in the cytoplasm. Functionally, one of several proteins that assist in the late maturation steps of the functional core of the 30S ribosomal subunit. Associates with free 30S ribosomal subunits (but not with 30S subunits that are part of 70S ribosomes or polysomes). Required for efficient processing of 16S rRNA. May interact with the 5'-terminal helix region of 16S rRNA. The sequence is that of Ribosome-binding factor A from Caldicellulosiruptor bescii (strain ATCC BAA-1888 / DSM 6725 / KCTC 15123 / Z-1320) (Anaerocellum thermophilum).